Reading from the N-terminus, the 213-residue chain is Orotate phosphoribosyltransferase (213 aa).

Position 26 (Lys-26) interacts with 5-phospho-alpha-D-ribose 1-diphosphate. 34–35 is an orotate binding site; it reads FF. Residues 72–73, Arg-99, Lys-100, Lys-103, His-105, and 124–132 each bind 5-phospho-alpha-D-ribose 1-diphosphate; these read YK and DDVITAGTA. 2 residues coordinate orotate: Thr-128 and Arg-156.

It belongs to the purine/pyrimidine phosphoribosyltransferase family. PyrE subfamily. Homodimer. It depends on Mg(2+) as a cofactor.

The catalysed reaction is orotidine 5'-phosphate + diphosphate = orotate + 5-phospho-alpha-D-ribose 1-diphosphate. It participates in pyrimidine metabolism; UMP biosynthesis via de novo pathway; UMP from orotate: step 1/2. In terms of biological role, catalyzes the transfer of a ribosyl phosphate group from 5-phosphoribose 1-diphosphate to orotate, leading to the formation of orotidine monophosphate (OMP). The protein is Orotate phosphoribosyltransferase of Pseudomonas savastanoi pv. phaseolicola (strain 1448A / Race 6) (Pseudomonas syringae pv. phaseolicola (strain 1448A / Race 6)).